Here is a 90-residue protein sequence, read N- to C-terminus: Arminin 45266 (90 aa).

Positions 1–20 are cleaved as a signal peptide; it reads MKSASLILFVALVALTYARS. Residues 21–59 constitute a propeptide that is removed on maturation; that stretch reads YEDVKEEIKNEVEKEILDDLEEENDELDDNTQEVNDPRA. Thr87 is modified (threonine amide).

The protein belongs to the arminin family. Expressed in entodermal epithelium along the body column.

The protein resides in the secreted. The protein localises to the target cell membrane. Functionally, antimicrobial peptide with a broad-spectrum antimicrobial activity. Keeps its antibacterial activity under a wide range of salt concentrations that mimic physiological conditions of human blood, which is surprising, since Hydra is an obligate freshwater animal with nearly no salt tolerance. Does not affect red blood cells. This chain is Arminin 45266, found in Hydra vulgaris (Hydra).